The chain runs to 173 residues: Protein C2 (173 aa).

The segment at 69-85 (CNCHFTIHHECNRGFSH) is a zinc-finger region.

This sequence belongs to the geminiviridae transcriptional activator protein family. In terms of assembly, monomer. Interacting with and inactivating host adenosine kinase 2 (ADK2) in the cytoplasm. Interacts with and inhibits host SNF1 kinase.

The protein resides in the host cytoplasm. Functionally, acts as a suppressor of RNA-mediated gene silencing, also known as post-transcriptional gene silencing (PTGS), a mechanism of plant viral defense that limits the accumulation of viral RNAs. Suppresses the host RNA silencing by inhibiting adenosine kinase 2 (ADK2), a kinase involved in a general methylation pathway. Also suppresses the host basal defense by interacting with and inhibiting SNF1 kinase, a key regulator of cell metabolism implicated in innate antiviral defense. Determines pathogenicity. This chain is Protein C2, found in Beet curly top virus (strain California/Logan) (BCTV).